The sequence spans 425 residues: Sensor histidine kinase NarS (425 aa).

6 helical membrane-spanning segments follow: residues 42–62, 71–91, 107–127, 130–150, 155–175, and 181–201; these read IASV…VVGT, IVLI…AYSA, LEPF…QLLS, GIYP…DVST, VVLA…PVML, and PETI…LMVV. Residues 224 to 425 enclose the Histidine kinase domain; sequence QTMTASEVLQ…HVCVELPLKR (202 aa). Phosphohistidine; by autocatalysis is present on His241.

In terms of processing, autophosphorylated on His-241.

Its subcellular location is the cell membrane. The catalysed reaction is ATP + protein L-histidine = ADP + protein N-phospho-L-histidine.. Member of the two-component regulatory system NarS/NarL involved in gene expression during aerobic nitrate metabolism. Plays therefore a crucial role in anaerobic survival of mycobacteria in host. Functions as a sensor protein kinase which is autophosphorylated at a histidine residue and transfers its phosphate group to the conserved aspartic acid residue in the regulatory domain of NarL. In turn, NarL binds to the upstream promoter regions of target genes to regulate their expression during aerobic nitrate metabolism. The chain is Sensor histidine kinase NarS from Mycobacterium tuberculosis (strain ATCC 25618 / H37Rv).